The primary structure comprises 184 residues: MAKLFFRYAAMNSGKSTQLLQIANNYESMDKKVALYTSAIDDRYGVGMITSRLNIQRESNTFDAGFDFLAHDYGDTACVLVDEAQFMTPEQAQQLHRLAHKRNIPVICFGLRTDFQGHPFPGSAWLLSLADDVEEIKTICHCGRKATMHIRIDGDGRRVKEGPQVEIGGEARYRAVCGRCFHHD.

ATP is bound by residues Ala9–Ser16 and Asp82–Gln85. Residue Glu83 is the Proton acceptor of the active site. Cys140, Cys142, Cys177, and Cys180 together coordinate Zn(2+).

This sequence belongs to the thymidine kinase family. In terms of assembly, homotetramer.

Its subcellular location is the cytoplasm. It catalyses the reaction thymidine + ATP = dTMP + ADP + H(+). The chain is Thymidine kinase from Chromobacterium violaceum (strain ATCC 12472 / DSM 30191 / JCM 1249 / CCUG 213 / NBRC 12614 / NCIMB 9131 / NCTC 9757 / MK).